Reading from the N-terminus, the 202-residue chain is LexA repressor (202 aa).

The H-T-H motif DNA-binding region spans 28–48; it reads RAEIAQQLGFRSPNAAEEHLK. Residues serine 119 and lysine 156 each act as for autocatalytic cleavage activity in the active site.

The protein belongs to the peptidase S24 family. In terms of assembly, homodimer.

It catalyses the reaction Hydrolysis of Ala-|-Gly bond in repressor LexA.. Its function is as follows. Represses a number of genes involved in the response to DNA damage (SOS response), including recA and lexA. Binds to the 16 bp palindromic sequence 5'-CTGTATATATATACAG-3'. In the presence of single-stranded DNA, RecA interacts with LexA causing an autocatalytic cleavage which disrupts the DNA-binding part of LexA, leading to derepression of the SOS regulon and eventually DNA repair. In Pectobacterium carotovorum subsp. carotovorum (strain PC1), this protein is LexA repressor.